Consider the following 104-residue polypeptide: U20-lycotoxin-Ls1d (104 aa).

The N-terminal stretch at 1–30 (MFSTSDQVSKMNSRILSALLILGIATCVIA) is a signal peptide. One can recognise a WAP domain in the interval 31 to 76 (GGFCPKSRHPQCNLSYKINDCCAQSDCRVGSVCCVEGCGNVCRAES). 5 disulfides stabilise this stretch: C34–C64, C42–C68, C51–C63, C52–C90, and C57–C72.

Belongs to the venom protein 11 family. 02 (wap-2) subfamily. In terms of processing, contains 5 disulfide bonds. Expressed by the venom gland.

It is found in the secreted. Functionally, has antibacterial activity. This Lycosa singoriensis (Wolf spider) protein is U20-lycotoxin-Ls1d.